The chain runs to 143 residues: Putative 2'-deoxynucleoside 5'-phosphate N-hydrolase 1 (143 aa).

Residues histidine 37, glutamate 82, and serine 106–methionine 108 each bind substrate.

The protein belongs to the 2'-deoxynucleoside 5'-phosphate N-hydrolase 1 family. In terms of assembly, monomer and homodimer.

It carries out the reaction a pyrimidine 2'-deoxyribonucleoside 5'-phosphate + H2O = a pyrimidine nucleobase + 2-deoxy-D-ribose 5-phosphate. It catalyses the reaction a purine 2'-deoxyribonucleoside 5'-phosphate + H2O = a purine nucleobase + 2-deoxy-D-ribose 5-phosphate. Catalyzes the cleavage of the N-glycosidic bond of deoxyribonucleoside 5'-monophosphates to yield deoxyribose 5-phosphate and a purine or pyrimidine base. In Thermofilum pendens (strain DSM 2475 / Hrk 5), this protein is Putative 2'-deoxynucleoside 5'-phosphate N-hydrolase 1.